The chain runs to 241 residues: 1-(5-phosphoribosyl)-5-[(5-phosphoribosylamino)methylideneamino] imidazole-4-carboxamide isomerase (241 aa).

The active-site Proton acceptor is the Asp10. The active-site Proton donor is the Asp131.

This sequence belongs to the HisA/HisF family.

The protein localises to the cytoplasm. The enzyme catalyses 1-(5-phospho-beta-D-ribosyl)-5-[(5-phospho-beta-D-ribosylamino)methylideneamino]imidazole-4-carboxamide = 5-[(5-phospho-1-deoxy-D-ribulos-1-ylimino)methylamino]-1-(5-phospho-beta-D-ribosyl)imidazole-4-carboxamide. It participates in amino-acid biosynthesis; L-histidine biosynthesis; L-histidine from 5-phospho-alpha-D-ribose 1-diphosphate: step 4/9. This is 1-(5-phosphoribosyl)-5-[(5-phosphoribosylamino)methylideneamino] imidazole-4-carboxamide isomerase from Bifidobacterium longum subsp. infantis (strain ATCC 15697 / DSM 20088 / JCM 1222 / NCTC 11817 / S12).